Here is a 534-residue protein sequence, read N- to C-terminus: Replication factor C large subunit (534 aa).

45–52 (GPPGIGKT) lines the ATP pocket. The segment covering 444 to 463 (KNKKEIKVKTKKDTVEDSSK) has biased composition (basic and acidic residues). The interval 444-534 (KNKKEIKVKT…KSRQTTLFDF (91 aa)) is disordered. A compositionally biased stretch (low complexity) spans 488–510 (SSNSTTKNKTESPKNSSKTSSKT). Positions 517 to 527 (TSKKNNKKKSR) are enriched in basic residues.

The protein belongs to the activator 1 small subunits family. RfcL subfamily. Heteromultimer composed of small subunits (RfcS) and large subunits (RfcL).

Functionally, part of the RFC clamp loader complex which loads the PCNA sliding clamp onto DNA. The polypeptide is Replication factor C large subunit (Methanosphaera stadtmanae (strain ATCC 43021 / DSM 3091 / JCM 11832 / MCB-3)).